We begin with the raw amino-acid sequence, 500 residues long: Probable 26S proteasome non-ATPase regulatory subunit 3 (500 aa).

The 180-residue stretch at 253–432 folds into the PCI domain; the sequence is ARFLYYLGRI…GYMRTKESTD (180 aa). The segment at 462–484 is disordered; that stretch reads RYPPKSYGKELESAEERREREQQ. Residues 468 to 484 show a composition bias toward basic and acidic residues; that stretch reads YGKELESAEERREREQQ.

Belongs to the proteasome subunit S3 family. In terms of assembly, the 26S proteasome is composed of a core protease, known as the 20S proteasome, capped at one or both ends by the 19S regulatory complex (RC). The RC is composed of at least 18 different subunits in two subcomplexes, the base and the lid, which form the portions proximal and distal to the 20S proteolytic core, respectively.

Acts as a regulatory subunit of the 26 proteasome which is involved in the ATP-dependent degradation of ubiquitinated proteins. This Anopheles stephensi (Indo-Pakistan malaria mosquito) protein is Probable 26S proteasome non-ATPase regulatory subunit 3 (DOXA2).